Here is a 3914-residue protein sequence, read N- to C-terminus: Trichosetin synthetase PKS-NRPS1 (3914 aa).

A Ketosynthase family 3 (KS3) domain is found at 4–420 (NEPIAIIGSA…GTNAHAIIEA (417 aa)). Residues cysteine 177, histidine 301, and histidine 340 each act as for beta-ketoacyl synthase activity in the active site. The interval 525–847 (VLTGQGAQWP…REKDDIQQFA (323 aa)) is malonyl-CoA:ACP transacylase (MAT) domain. The N-terminal hotdog fold stretch occupies residues 913–1047 (HPILGRRCHD…AHVKASLSVP (135 aa)). A dehydratase (DH) domain region spans residues 913–1214 (HPILGRRCHD…MELVPFSPAT (302 aa)). The region spanning 913–1216 (HPILGRRCHD…LVPFSPATPE (304 aa)) is the PKS/mFAS DH domain. Histidine 946 functions as the Proton acceptor; for dehydratase activity in the catalytic mechanism. Positions 1062-1216 (LRKVEVDRFY…LVPFSPATPE (155 aa)) are C-terminal hotdog fold. The active-site Proton donor; for dehydratase activity is the aspartate 1122. Positions 1364–1593 (EGFGLDLVNK…DLPETKSTEL (230 aa)) are methyltransferase (MT) domain. Residues 2083–2255 (TFLLIGLSGE…VAASSIDISS (173 aa)) are ketoreductase (KR) domain. A Carrier 1 domain is found at 2356 to 2436 (LADVKTKADA…DLIEESLNLI (81 aa)). Serine 2396 bears the O-(pantetheine 4'-phosphoryl)serine mark. Positions 2447-2518 (EAGSTPTTQP…DSTDNSTPLK (72 aa)) are disordered. Over residues 2481-2500 (QQTGSDSSRSPIDTPLTSME) the composition is skewed to polar residues. The condensation (C) domain stretch occupies residues 2529 to 2956 (SYGQAGFWFL…VQGTNKAADT (428 aa)). Residues 2991–3388 (QTIQANSTKV…LLFCDGRLED (398 aa)) are adenylation (A) (KR) domain. One can recognise a Carrier 2 domain in the interval 3502-3579 (GTLTVAEQRL…TMAVVLESCG (78 aa)). At serine 3539 the chain carries O-(pantetheine 4'-phosphoryl)serine. The reductase (RED) domain stretch occupies residues 3615–3831 (LTGSAGYLGR…VLPTGDIVKA (217 aa)).

The protein in the C-terminal section; belongs to the NRP synthetase family.

The enzyme catalyses L-serine + 7 malonyl-CoA + acetyl-CoA + 2 S-adenosyl-L-methionine + ATP + 8 NADPH + 11 H(+) = (5S)-3-[(2E,6R,8E,10E,12E)-2,6-dimethyltetradeca-2,8,10,12-tetraenoyl]-5-(hydroxymethyl)pyrrolidine-2,4-dione + AMP + 2 S-adenosyl-L-homocysteine + 7 CO2 + diphosphate + 8 NADP(+) + 8 CoA + 6 H2O. It participates in mycotoxin biosynthesis. Functionally, hybrid PKS-NRPS synthetase; part of the gene cluster that mediates the biosynthesis of trichosetin, a trans-fused decalin-containing tetramic acid with antimicrobial activity. The PKS module of PKS-NRPS1 together with the enoylreductase (ER) catalyze the formation of the polyketide unit which is then conjugated to L-serine by the condensation domain of the PKS-NRPS1 NRPS module. Activity of the Dieckmann cyclase domain (RED) results in release of the Dieckmann product intermediate. Diels-Alderase (DA) is involved in endo-selective Diels-Alder cycloaddition to form the decalin ring, leading to the production of N-desmethylequisetin also called trichosetin. The cluster does not contain the equisetin N-methyltransferase and consequently, trichosetin is isolated as final product. This Gibberella fujikuroi (strain CBS 195.34 / IMI 58289 / NRRL A-6831) (Bakanae and foot rot disease fungus) protein is Trichosetin synthetase PKS-NRPS1.